An 81-amino-acid chain; its full sequence is MKLTWMMIVAVLFLTAWTFVTADDTRYKLENPFLKARNELQKLEASQLNERGCLDPGYFCGTPFLGAYCCGGICLIVCIET.

Residues 1–22 (MKLTWMMIVAVLFLTAWTFVTA) form the signal peptide. A propeptide spanning residues 23–51 (DDTRYKLENPFLKARNELQKLEASQLNER) is cleaved from the precursor. 3 cysteine pairs are disulfide-bonded: C53–C70, C60–C74, and C69–C78.

Belongs to the conotoxin O1 superfamily. Expressed by the venom duct.

The protein resides in the secreted. This chain is Conotoxin ViKr92, found in Conus virgo (Virgin cone).